The primary structure comprises 196 residues: ATP-dependent Clp protease proteolytic subunit (196 aa).

The Nucleophile role is filled by Ser101. The active site involves His126.

This sequence belongs to the peptidase S14 family. Component of the chloroplastic Clp protease core complex.

Its subcellular location is the plastid. The protein localises to the chloroplast stroma. It catalyses the reaction Hydrolysis of proteins to small peptides in the presence of ATP and magnesium. alpha-casein is the usual test substrate. In the absence of ATP, only oligopeptides shorter than five residues are hydrolyzed (such as succinyl-Leu-Tyr-|-NHMec, and Leu-Tyr-Leu-|-Tyr-Trp, in which cleavage of the -Tyr-|-Leu- and -Tyr-|-Trp bonds also occurs).. Functionally, cleaves peptides in various proteins in a process that requires ATP hydrolysis. Has a chymotrypsin-like activity. Plays a major role in the degradation of misfolded proteins. The protein is ATP-dependent Clp protease proteolytic subunit of Lotus japonicus (Lotus corniculatus var. japonicus).